The primary structure comprises 604 residues: Elongation factor 4 (604 aa).

In terms of domain architecture, tr-type G spans 10–191; it reads KNIRNFSIIA…KIITTIPAPS (182 aa). GTP-binding positions include 22–27 and 138–141; these read DHGKST and NKID.

Belongs to the TRAFAC class translation factor GTPase superfamily. Classic translation factor GTPase family. LepA subfamily.

The protein localises to the cell inner membrane. The catalysed reaction is GTP + H2O = GDP + phosphate + H(+). Its function is as follows. Required for accurate and efficient protein synthesis under certain stress conditions. May act as a fidelity factor of the translation reaction, by catalyzing a one-codon backward translocation of tRNAs on improperly translocated ribosomes. Back-translocation proceeds from a post-translocation (POST) complex to a pre-translocation (PRE) complex, thus giving elongation factor G a second chance to translocate the tRNAs correctly. Binds to ribosomes in a GTP-dependent manner. In Helicobacter acinonychis (strain Sheeba), this protein is Elongation factor 4.